Reading from the N-terminus, the 739-residue chain is Phosphoribosylformylglycinamidine synthase subunit PurL (739 aa).

The active site involves His-54. Residues Tyr-57 and Lys-96 each coordinate ATP. Glu-98 contributes to the Mg(2+) binding site. Residues 99-102 (SHNH) and Arg-121 each bind substrate. His-100 (proton acceptor) is an active-site residue. Position 122 (Asp-122) interacts with Mg(2+). Gln-245 serves as a coordination point for substrate. Asp-273 contacts Mg(2+). Residue 317–319 (ESQ) participates in substrate binding. ATP-binding residues include Asp-500 and Gly-537. Asn-538 serves as a coordination point for Mg(2+). Ser-540 contributes to the substrate binding site.

This sequence belongs to the FGAMS family. As to quaternary structure, monomer. Part of the FGAM synthase complex composed of 1 PurL, 1 PurQ and 2 PurS subunits.

The protein localises to the cytoplasm. The catalysed reaction is N(2)-formyl-N(1)-(5-phospho-beta-D-ribosyl)glycinamide + L-glutamine + ATP + H2O = 2-formamido-N(1)-(5-O-phospho-beta-D-ribosyl)acetamidine + L-glutamate + ADP + phosphate + H(+). Its pathway is purine metabolism; IMP biosynthesis via de novo pathway; 5-amino-1-(5-phospho-D-ribosyl)imidazole from N(2)-formyl-N(1)-(5-phospho-D-ribosyl)glycinamide: step 1/2. Functionally, part of the phosphoribosylformylglycinamidine synthase complex involved in the purines biosynthetic pathway. Catalyzes the ATP-dependent conversion of formylglycinamide ribonucleotide (FGAR) and glutamine to yield formylglycinamidine ribonucleotide (FGAM) and glutamate. The FGAM synthase complex is composed of three subunits. PurQ produces an ammonia molecule by converting glutamine to glutamate. PurL transfers the ammonia molecule to FGAR to form FGAM in an ATP-dependent manner. PurS interacts with PurQ and PurL and is thought to assist in the transfer of the ammonia molecule from PurQ to PurL. This chain is Phosphoribosylformylglycinamidine synthase subunit PurL, found in Bacillus cereus (strain Q1).